The chain runs to 147 residues: MVISIRRSRHEEGEELVAIWCRSVDATHDFLSAEYRTELEDLVRSFLPEAPLWVAVNERDQPVGFMLLSGQHMDALFIDPDVRGCGVGRVLVEHALSMAPELTTNVNEQNEQAVGFYKKVGFKVTGRSEVDDLGKPYPLLNLAYVGA.

Residues 3–144 enclose the N-acetyltransferase domain; the sequence is ISIRRSRHEE…KPYPLLNLAY (142 aa).

This sequence belongs to the acetyltransferase family.

The enzyme catalyses L-lysyl-[protein] + acetyl-CoA = N(6)-acetyl-L-lysyl-[protein] + CoA + H(+). In terms of biological role, N-epsilon-lysine acetyltransferase that catalyzes acetylation of a large number of proteins. Binds acetyl-CoA. This chain is Peptidyl-lysine N-acetyltransferase YjaB (yjaB), found in Escherichia coli (strain K12).